The chain runs to 861 residues: Nuclear cap-binding protein complex subunit 1 (861 aa).

The Nuclear localization signal motif lies at 22–30; that stretch reads RMPKRQRIP. The MIF4G domain occupies 36–264; the sequence is CKEMMPDIRT…LVRVVLPNVK (229 aa).

Belongs to the NCBP1 family. In terms of assembly, component of the nuclear cap-binding complex (CBC), a heterodimer composed of STO1/CBC1 and CBC2 that interacts with capped RNAs. The complex interacts strongly with the importin subunit alpha SRP1. The SRP1-CBC trimer also binds to capped RNAs, but formation of the importin alpha/beta heterodimer upon binding of KAP95 to SRP1 in the cytoplasm causes dissociation of CBC from the RNA. The CBC complex is part of the commitment complex 1 (CC1), binding to the cap of pre-mRNA and interacting with U1 snRNP subunits MUD2 and SNU56. The CBC complex is part of the NRD1 complex, composed of CBC2, NAB1, NRD1, SEN1 and STO1/CBC2. The CBC complex also interacts with NPL3 and eIF4G (TIF4631 and TIF4632).

It is found in the nucleus. It localises to the cytoplasm. The protein resides in the perinuclear region. Functionally, component of the CBC complex, which binds co-transcriptionally to the 5'-cap of pre-mRNAs and is involved in maturation, export and degradation of nuclear mRNAs. The CBC complex is required for efficient pre-mRNA splicing through efficient commitment complex and spliceosome formation. Together with NPL3, the CBC complex is required for export of mRNAs out of the nucleus. The CBC complex is also involved in nuclear mRNA degradation, probably by directing the mRNAs to the sites of degradation. Affects replication of the positive-strand RNA virus BMV. This chain is Nuclear cap-binding protein complex subunit 1 (STO1), found in Saccharomyces cerevisiae (strain ATCC 204508 / S288c) (Baker's yeast).